A 210-amino-acid chain; its full sequence is Probable GTP-binding protein EngB (210 aa).

In terms of domain architecture, EngB-type G spans 22 to 198; that stretch reads FLPEYAFIGR…LTYIDEVNQE (177 aa). Residues 30-37, 57-61, 75-78, 142-145, and 177-179 each bind GTP; these read GRSNVGKS, GKTQL, DLPG, TKAD, and TSS. 2 residues coordinate Mg(2+): serine 37 and threonine 59.

It belongs to the TRAFAC class TrmE-Era-EngA-EngB-Septin-like GTPase superfamily. EngB GTPase family. Mg(2+) is required as a cofactor.

In terms of biological role, necessary for normal cell division and for the maintenance of normal septation. The protein is Probable GTP-binding protein EngB of Flavobacterium johnsoniae (strain ATCC 17061 / DSM 2064 / JCM 8514 / BCRC 14874 / CCUG 350202 / NBRC 14942 / NCIMB 11054 / UW101) (Cytophaga johnsonae).